The sequence spans 529 residues: Type I restriction enzyme StySPI methylase subunit (529 aa).

S-adenosyl-L-methionine contacts are provided by residues 148 to 153 (QYFTPR), 178 to 180 (TAG), and glutamate 216. A disordered region spans residues 424 to 443 (AEESEVADSEENKNADQHQA).

The protein belongs to the N(4)/N(6)-methyltransferase family. In terms of assembly, the type I restriction/modification system is composed of three polypeptides R, M and S; the restriction enzyme has stoichiometry R(2)M(2)S(1) while the methyltransferase is M(2)S(1).

It carries out the reaction a 2'-deoxyadenosine in DNA + S-adenosyl-L-methionine = an N(6)-methyl-2'-deoxyadenosine in DNA + S-adenosyl-L-homocysteine + H(+). In terms of biological role, the subtype gamma methyltransferase (M) subunit of a type I restriction enzyme. The M and S subunits together form a methyltransferase (MTase) that methylates A-2 on the top strand and A-3 on the bottom strand of the sequence 5'-AACN(6)GTRC-3'. In the presence of the R subunit the complex can also act as an endonuclease, binding to the same target sequence but cutting the DNA some distance from this site. Whether the DNA is cut or modified depends on the methylation state of the target sequence. When the target site is unmodified, the DNA is cut. When the target site is hemimethylated, the complex acts as a maintenance MTase modifying the DNA so that both strands become methylated. After locating a non-methylated recognition site, the enzyme complex serves as a molecular motor that translocates DNA in an ATP-dependent manner until a collision occurs that triggers cleavage. The sequence is that of Type I restriction enzyme StySPI methylase subunit from Salmonella potsdam.